The primary structure comprises 556 residues: Formate--tetrahydrofolate ligase 1 (556 aa).

65–72 (TPAGEGKS) provides a ligand contact to ATP.

Belongs to the formate--tetrahydrofolate ligase family.

The enzyme catalyses (6S)-5,6,7,8-tetrahydrofolate + formate + ATP = (6R)-10-formyltetrahydrofolate + ADP + phosphate. It functions in the pathway one-carbon metabolism; tetrahydrofolate interconversion. The polypeptide is Formate--tetrahydrofolate ligase 1 (Streptococcus pyogenes serotype M1).